The primary structure comprises 231 residues: Large ribosomal subunit protein uL1 (231 aa).

Belongs to the universal ribosomal protein uL1 family. As to quaternary structure, part of the 50S ribosomal subunit.

Functionally, binds directly to 23S rRNA. The L1 stalk is quite mobile in the ribosome, and is involved in E site tRNA release. Its function is as follows. Protein L1 is also a translational repressor protein, it controls the translation of the L11 operon by binding to its mRNA. This is Large ribosomal subunit protein uL1 from Polaromonas sp. (strain JS666 / ATCC BAA-500).